The sequence spans 150 residues: Snaclec 7 (150 aa).

The N-terminal stretch at 1–23 is a signal peptide; that stretch reads MGRFISISFGLLVVFLSLSGTGA. 3 disulfide bridges follow: C27-C38, C55-C144, and C121-C136. Residues 34-145 form the C-type lectin domain; the sequence is YEGYCYKVFN…CNDPRYFVCK (112 aa).

This sequence belongs to the snaclec family. In terms of assembly, heterodimer; disulfide-linked.

The protein localises to the secreted. In terms of biological role, interferes with one step of hemostasis (modulation of platelet aggregation, or coagulation cascade, for example). The polypeptide is Snaclec 7 (Daboia siamensis (Eastern Russel's viper)).